A 399-amino-acid polypeptide reads, in one-letter code: tRNA-specific 2-thiouridylase MnmA (399 aa).

ATP-binding positions include 21-28 (AMSGGVDS) and leucine 47. Residue cysteine 115 is the Nucleophile of the active site. An intrachain disulfide couples cysteine 115 to cysteine 211. Glycine 139 serves as a coordination point for ATP. The tract at residues 161 to 163 (RDQ) is interaction with tRNA. Cysteine 211 serves as the catalytic Cysteine persulfide intermediate.

It belongs to the MnmA/TRMU family.

It localises to the cytoplasm. The enzyme catalyses S-sulfanyl-L-cysteinyl-[protein] + uridine(34) in tRNA + AH2 + ATP = 2-thiouridine(34) in tRNA + L-cysteinyl-[protein] + A + AMP + diphosphate + H(+). Functionally, catalyzes the 2-thiolation of uridine at the wobble position (U34) of tRNA, leading to the formation of s(2)U34. This is tRNA-specific 2-thiouridylase MnmA from Parvibaculum lavamentivorans (strain DS-1 / DSM 13023 / NCIMB 13966).